The following is a 412-amino-acid chain: Protein ALF (412 aa).

Disordered regions lie at residues 1-47 (MDPE…PLPP) and 154-234 (GLSE…GISE). Residues 31–47 (PPQPPPPPLPPPQPLPP) are compositionally biased toward pro residues. A compositionally biased stretch (basic residues) spans 187–196 (MRQRRRKKVV). Residues 206-221 (MEEDEDTEEGQEDNED) are compositionally biased toward acidic residues. DNA-binding regions lie at residues 237-241 (REHPF), 306-313 (NKPKMRHY), and 377-380 (YVPT).

It belongs to the FLO/LFY family. In terms of tissue distribution, expressed in the floral meristem and also in the vegetative meristem.

Its subcellular location is the nucleus. Its function is as follows. Probable transcription factor required for the specification of floral meristem identity. This Petunia hybrida (Petunia) protein is Protein ALF (ALF).